Here is a 135-residue protein sequence, read N- to C-terminus: Large ribosomal subunit protein eL32 (135 aa).

This sequence belongs to the eukaryotic ribosomal protein eL32 family.

This Methanococcus maripaludis (strain C5 / ATCC BAA-1333) protein is Large ribosomal subunit protein eL32.